The following is a 56-amino-acid chain: Large ribosomal subunit protein bL32 (56 aa).

Basic residues predominate over residues 1-16 (MAVQKSKKSRSRRDMR). The disordered stretch occupies residues 1-56 (MAVQKSKKSRSRRDMRRSHDAIDGPTLSVDSTTGETHRRHHVTADGYYKGRKVVNK).

Belongs to the bacterial ribosomal protein bL32 family.

This Idiomarina loihiensis (strain ATCC BAA-735 / DSM 15497 / L2-TR) protein is Large ribosomal subunit protein bL32.